The chain runs to 223 residues: Phosphoribosylformylglycinamidine synthase subunit PurQ (223 aa).

In terms of domain architecture, Glutamine amidotransferase type-1 spans Lys2 to Ala223. Cys86 (nucleophile) is an active-site residue. Active-site residues include His195 and Glu197.

As to quaternary structure, part of the FGAM synthase complex composed of 1 PurL, 1 PurQ and 2 PurS subunits.

Its subcellular location is the cytoplasm. It catalyses the reaction N(2)-formyl-N(1)-(5-phospho-beta-D-ribosyl)glycinamide + L-glutamine + ATP + H2O = 2-formamido-N(1)-(5-O-phospho-beta-D-ribosyl)acetamidine + L-glutamate + ADP + phosphate + H(+). The enzyme catalyses L-glutamine + H2O = L-glutamate + NH4(+). It functions in the pathway purine metabolism; IMP biosynthesis via de novo pathway; 5-amino-1-(5-phospho-D-ribosyl)imidazole from N(2)-formyl-N(1)-(5-phospho-D-ribosyl)glycinamide: step 1/2. In terms of biological role, part of the phosphoribosylformylglycinamidine synthase complex involved in the purines biosynthetic pathway. Catalyzes the ATP-dependent conversion of formylglycinamide ribonucleotide (FGAR) and glutamine to yield formylglycinamidine ribonucleotide (FGAM) and glutamate. The FGAM synthase complex is composed of three subunits. PurQ produces an ammonia molecule by converting glutamine to glutamate. PurL transfers the ammonia molecule to FGAR to form FGAM in an ATP-dependent manner. PurS interacts with PurQ and PurL and is thought to assist in the transfer of the ammonia molecule from PurQ to PurL. This chain is Phosphoribosylformylglycinamidine synthase subunit PurQ, found in Lactobacillus acidophilus (strain ATCC 700396 / NCK56 / N2 / NCFM).